A 313-amino-acid polypeptide reads, in one-letter code: Ribosomal RNA small subunit methyltransferase H (313 aa).

S-adenosyl-L-methionine contacts are provided by residues Gly35 to His37, Asp55, Phe79, Asp101, and Gln108.

Belongs to the methyltransferase superfamily. RsmH family.

Its subcellular location is the cytoplasm. It carries out the reaction cytidine(1402) in 16S rRNA + S-adenosyl-L-methionine = N(4)-methylcytidine(1402) in 16S rRNA + S-adenosyl-L-homocysteine + H(+). In terms of biological role, specifically methylates the N4 position of cytidine in position 1402 (C1402) of 16S rRNA. This Shigella sonnei (strain Ss046) protein is Ribosomal RNA small subunit methyltransferase H.